A 236-amino-acid polypeptide reads, in one-letter code: 7-cyano-7-deazaguanine synthase (236 aa).

An ATP-binding site is contributed by 13-23; the sequence is FSGGQDSTVCL. Residues C200, C215, C218, and C221 each coordinate Zn(2+).

It belongs to the QueC family. Requires Zn(2+) as cofactor.

It catalyses the reaction 7-carboxy-7-deazaguanine + NH4(+) + ATP = 7-cyano-7-deazaguanine + ADP + phosphate + H2O + H(+). The protein operates within purine metabolism; 7-cyano-7-deazaguanine biosynthesis. Its function is as follows. Catalyzes the ATP-dependent conversion of 7-carboxy-7-deazaguanine (CDG) to 7-cyano-7-deazaguanine (preQ(0)). The protein is 7-cyano-7-deazaguanine synthase of Parvibaculum lavamentivorans (strain DS-1 / DSM 13023 / NCIMB 13966).